Reading from the N-terminus, the 188-residue chain is Archaemetzincin (188 aa).

H137 provides a ligand contact to Zn(2+). E138 acts as the Proton acceptor in catalysis. Zn(2+) contacts are provided by H141, H147, C148, C153, C172, and C175.

It belongs to the peptidase M54 family. In terms of assembly, monomer. Requires Zn(2+) as cofactor.

In terms of biological role, probable zinc metalloprotease whose natural substrate is unknown. The sequence is that of Archaemetzincin from Pyrococcus horikoshii (strain ATCC 700860 / DSM 12428 / JCM 9974 / NBRC 100139 / OT-3).